A 204-amino-acid chain; its full sequence is Somatotropin (204 aa).

The first 17 residues, 1–17 (MDRVVLMLSVMSLGVSS), serve as a signal peptide directing secretion. The residue at position 18 (Gln18) is a Pyrrolidone carboxylic acid. Residue His36 coordinates Zn(2+). Cys69 and Cys177 are oxidised to a cystine. Residue Glu186 participates in Zn(2+) binding. A disulfide bridge connects residues Cys194 and Cys202.

The protein belongs to the somatotropin/prolactin family.

It localises to the secreted. Growth hormone plays an important role in growth control and is involved in the regulation of several anabolic processes. Implicated as an osmoregulatory substance important for seawater adaptation. This is Somatotropin (gh) from Sparus aurata (Gilthead sea bream).